The following is a 367-amino-acid chain: UDP-N-acetylglucosamine--N-acetylmuramyl-(pentapeptide) pyrophosphoryl-undecaprenol N-acetylglucosamine transferase (367 aa).

Residues 15–17 (TGG), Asn127, Arg163, Ser191, Ile249, and Gln294 each bind UDP-N-acetyl-alpha-D-glucosamine.

The protein belongs to the glycosyltransferase 28 family. MurG subfamily.

The protein localises to the cell inner membrane. The catalysed reaction is di-trans,octa-cis-undecaprenyl diphospho-N-acetyl-alpha-D-muramoyl-L-alanyl-D-glutamyl-meso-2,6-diaminopimeloyl-D-alanyl-D-alanine + UDP-N-acetyl-alpha-D-glucosamine = di-trans,octa-cis-undecaprenyl diphospho-[N-acetyl-alpha-D-glucosaminyl-(1-&gt;4)]-N-acetyl-alpha-D-muramoyl-L-alanyl-D-glutamyl-meso-2,6-diaminopimeloyl-D-alanyl-D-alanine + UDP + H(+). Its pathway is cell wall biogenesis; peptidoglycan biosynthesis. Cell wall formation. Catalyzes the transfer of a GlcNAc subunit on undecaprenyl-pyrophosphoryl-MurNAc-pentapeptide (lipid intermediate I) to form undecaprenyl-pyrophosphoryl-MurNAc-(pentapeptide)GlcNAc (lipid intermediate II). This is UDP-N-acetylglucosamine--N-acetylmuramyl-(pentapeptide) pyrophosphoryl-undecaprenol N-acetylglucosamine transferase from Burkholderia mallei (strain NCTC 10247).